The chain runs to 205 residues: MNGFTNKDFETFNINGLDERMEAIQTRIQPKFQQIGESLAEDLSKKTNNELYLHIAKHARRTVNPPNDTWLAIADNKRGYKKHPHFQVGVFDDHVFIWLALIYELPNKSKIASAYINHFDEVKNLPTSYVVSLDHTKKDAISLTDLNKSHLERFRDVKKAEFLIGKHIEKGDPILANGDELYQFIMDVFEQLLPLYQLAIDSRDE.

It belongs to the UPF0637 family.

The protein is UPF0637 protein OB1420 of Oceanobacillus iheyensis (strain DSM 14371 / CIP 107618 / JCM 11309 / KCTC 3954 / HTE831).